A 225-amino-acid polypeptide reads, in one-letter code: Ribosomal RNA small subunit methyltransferase G (225 aa).

Residues G89, L94, 140–141, and R157 each bind S-adenosyl-L-methionine; that span reads IE.

Belongs to the methyltransferase superfamily. RNA methyltransferase RsmG family.

It is found in the cytoplasm. The enzyme catalyses guanosine(527) in 16S rRNA + S-adenosyl-L-methionine = N(7)-methylguanosine(527) in 16S rRNA + S-adenosyl-L-homocysteine. Functionally, specifically methylates the N7 position of guanine in position 527 of 16S rRNA. The chain is Ribosomal RNA small subunit methyltransferase G from Psychrobacter sp. (strain PRwf-1).